The chain runs to 381 residues: Putative 8-amino-7-oxononanoate synthase (381 aa).

R20 contacts substrate. 107-108 (GY) is a pyridoxal 5'-phosphate binding site. H132 lines the substrate pocket. Pyridoxal 5'-phosphate-binding positions include S180, 205 to 208 (DEAH), and 236 to 239 (TLSK). K239 is subject to N6-(pyridoxal phosphate)lysine. T351 contacts substrate.

Belongs to the class-II pyridoxal-phosphate-dependent aminotransferase family. BioF subfamily. Homodimer. Pyridoxal 5'-phosphate serves as cofactor.

It carries out the reaction 6-carboxyhexanoyl-[ACP] + L-alanine + H(+) = (8S)-8-amino-7-oxononanoate + holo-[ACP] + CO2. It participates in cofactor biosynthesis; biotin biosynthesis. In terms of biological role, catalyzes the decarboxylative condensation of pimeloyl-[acyl-carrier protein] and L-alanine to produce 8-amino-7-oxononanoate (AON), [acyl-carrier protein], and carbon dioxide. In Rippkaea orientalis (strain PCC 8801 / RF-1) (Cyanothece sp. (strain PCC 8801)), this protein is Putative 8-amino-7-oxononanoate synthase (bioF).